Here is a 509-residue protein sequence, read N- to C-terminus: Maturase K (509 aa).

The protein belongs to the intron maturase 2 family. MatK subfamily.

Its subcellular location is the plastid. The protein localises to the chloroplast. In terms of biological role, usually encoded in the trnK tRNA gene intron. Probably assists in splicing its own and other chloroplast group II introns. This is Maturase K from Solanum bulbocastanum (Wild potato).